The primary structure comprises 350 residues: Phenylalanine--tRNA ligase alpha subunit (350 aa).

A Mg(2+)-binding site is contributed by E262.

It belongs to the class-II aminoacyl-tRNA synthetase family. Phe-tRNA synthetase alpha subunit type 1 subfamily. As to quaternary structure, tetramer of two alpha and two beta subunits. Mg(2+) serves as cofactor.

It localises to the cytoplasm. It carries out the reaction tRNA(Phe) + L-phenylalanine + ATP = L-phenylalanyl-tRNA(Phe) + AMP + diphosphate + H(+). This chain is Phenylalanine--tRNA ligase alpha subunit (pheS), found in Thermus thermophilus (strain ATCC 27634 / DSM 579 / HB8).